Reading from the N-terminus, the 159-residue chain is Phosphopantetheine adenylyltransferase (159 aa).

A substrate-binding site is contributed by Thr9. ATP-binding positions include 9 to 10 (TF) and His17. Substrate is bound by residues Lys41, Leu73, and Arg87. ATP contacts are provided by residues 88–90 (GLR), Glu98, and 123–129 (YSFISST).

Belongs to the bacterial CoaD family. As to quaternary structure, homohexamer. Mg(2+) serves as cofactor.

It localises to the cytoplasm. It carries out the reaction (R)-4'-phosphopantetheine + ATP + H(+) = 3'-dephospho-CoA + diphosphate. It participates in cofactor biosynthesis; coenzyme A biosynthesis; CoA from (R)-pantothenate: step 4/5. In terms of biological role, reversibly transfers an adenylyl group from ATP to 4'-phosphopantetheine, yielding dephospho-CoA (dPCoA) and pyrophosphate. The polypeptide is Phosphopantetheine adenylyltransferase (Pseudomonas fluorescens (strain ATCC BAA-477 / NRRL B-23932 / Pf-5)).